The sequence spans 377 residues: MEESEEPADAGQSLPPVYIYSPEYVSVCDSLAKVPKRASMVHSLIEAYALHKQMRIVKPKVASMEEMASFHTDAYLQHLQKVSEDGDDDHPDSIEYGLGYDCPATEGIFDYAAAVGGATITAAQCLIDGMCKVAINWSGGWHHAKKDEASGFCYLNDAVLGILRLRRKFDRILYVDLDLHHGDGVEDAFSFTSKVMTVSLHKFSPGFFPGTGDVSDVGLGKGRYYSVNVPIQDCIQDERYYHICESVLKEVYIAFNPKAVVLQLGADTIAGDPMCSFNMTPVGIGKCLKYILQWELATLILGGGGYNLANTARCWTYLTGVILGKTLSSEIPDHEFFTAYGPDYVLEITPSCRPDRNEPHRVQQILNYIKGNLKHVV.

Positions 14–324 are histone deacetylase; sequence LPPVYIYSPE…WTYLTGVILG (311 aa). Ser-39 is subject to Phosphoserine. Asp-101 provides a ligand contact to substrate. His-143 (proton acceptor) is an active-site residue. Substrate is bound at residue Gly-151. A divalent metal cation is bound by residues Asp-178, His-180, and Asp-267. Tyr-306 serves as a coordination point for substrate.

The protein belongs to the histone deacetylase family. HD type 1 subfamily. As to quaternary structure, interacts with CBFA2T3. Interacts with phosphorylated SMG5/EST1B; this interaction protects SMG5 from ubiquitin-mediated degradation. Associates with alpha-SMA (smooth muscle alpha-actin). The cofactor is a divalent metal cation. In terms of processing, phosphorylated by PKA on serine 39. Phosphorylation reduces deacetylase activity observed preferentially on histones H3 and H4.

It is found in the nucleus. The protein resides in the chromosome. Its subcellular location is the cytoplasm. The catalysed reaction is N(6)-acetyl-L-lysyl-[histone] + H2O = L-lysyl-[histone] + acetate. The enzyme catalyses N(6)-acetyl-L-lysyl-[protein] + H2O = L-lysyl-[protein] + acetate. It catalyses the reaction N(6)-(2E)-butenoyl-L-lysyl-[protein] + H2O = (2E)-2-butenoate + L-lysyl-[protein]. Its activity is inhibited by trichostatin A (TSA) and butyrate, 2 well known histone deacetylase inhibitors. In terms of biological role, histone deacetylase that catalyzes the deacetylation of lysine residues on the N-terminal part of the core histones (H2A, H2B, H3 and H4). Histone deacetylation gives a tag for epigenetic repression and plays an important role in transcriptional regulation, cell cycle progression and developmental events. Histone deacetylases act via the formation of large multiprotein complexes. Also involved in the deacetylation of cohesin complex protein SMC3 regulating release of cohesin complexes from chromatin. May play a role in smooth muscle cell contractility. In addition to protein deacetylase activity, also has protein-lysine deacylase activity: acts as a protein decrotonylase by mediating decrotonylation ((2E)-butenoyl) of histones. This is Histone deacetylase 8 (HDAC8) from Bos taurus (Bovine).